We begin with the raw amino-acid sequence, 466 residues long: Asparagine--tRNA ligase (466 aa).

It belongs to the class-II aminoacyl-tRNA synthetase family. As to quaternary structure, homodimer.

It localises to the cytoplasm. The catalysed reaction is tRNA(Asn) + L-asparagine + ATP = L-asparaginyl-tRNA(Asn) + AMP + diphosphate + H(+). This chain is Asparagine--tRNA ligase, found in Shewanella baltica (strain OS155 / ATCC BAA-1091).